Reading from the N-terminus, the 121-residue chain is Small ribosomal subunit protein uS13 (121 aa).

The segment at 97 to 121 (VRGQRTRTNARTRRGARKTVAGKKK) is disordered. Residues 100-121 (QRTRTNARTRRGARKTVAGKKK) show a composition bias toward basic residues.

The protein belongs to the universal ribosomal protein uS13 family. Part of the 30S ribosomal subunit. Forms a loose heterodimer with protein S19. Forms two bridges to the 50S subunit in the 70S ribosome.

Its function is as follows. Located at the top of the head of the 30S subunit, it contacts several helices of the 16S rRNA. In the 70S ribosome it contacts the 23S rRNA (bridge B1a) and protein L5 of the 50S subunit (bridge B1b), connecting the 2 subunits; these bridges are implicated in subunit movement. Contacts the tRNAs in the A and P-sites. The chain is Small ribosomal subunit protein uS13 from Prochlorococcus marinus (strain MIT 9303).